The primary structure comprises 120 residues: MARSSFKLEHPLERRQAEANRIREKYPDRIPVIVEKAERSDIPDIDKKKYLVPADLTVGQFVYVVRKRIKLSAEKAIFIFVKNTLPPTAALMSAIYEENKDEDGFLYMTYSGENTFGLFV.

The disordered stretch occupies residues 1–20 (MARSSFKLEHPLERRQAEAN). Gly117 carries Phosphatidylethanolamine amidated glycine lipidation. Residues 118 to 120 (LFV) constitute a propeptide, removed in mature form.

Belongs to the ATG8 family. Interacts with ATG4. The C-terminal 3 residues are removed by ATG4 to expose Gly-117 at the C-terminus. The C-terminal Gly is then amidated with phosphatidylethanolamine by an activating system similar to that for ubiquitin.

Its subcellular location is the cytoplasmic vesicle. The protein resides in the autophagosome membrane. It is found in the vacuole membrane. It localises to the cytoplasm. The protein localises to the cytoskeleton. Ubiquitin-like modifier involved in autophagosomes formation. May mediate the delivery of the autophagosomes to the vacuole via the microtubule cytoskeleton. The protein is Autophagy-related protein 8C (ATG8C) of Oryza sativa subsp. indica (Rice).